The sequence spans 328 residues: C-type lectin domain family 11 member A (328 aa).

The N-terminal stretch at 1 to 21 (MQAAWLLGALLVPHLLSFGHG) is a signal peptide. The disordered stretch occupies residues 58-111 (PTGVGNKDNLAENSEGKEVWEATETQGEEEEEETTTTPSSSPTPFPSPSPTSED). In terms of domain architecture, C-type lectin spans 188-325 (LGHKCFLLSR…CERRLYFVCE (138 aa)). Cystine bridges form between C209-C324 and C301-C316.

In terms of processing, O-glycosylated. Probably sulfated on the O-glycans.

The protein resides in the cytoplasm. It localises to the secreted. Its function is as follows. Promotes osteogenesis by stimulating the differentiation of mesenchymal progenitors into mature osteoblasts. Important for repair and maintenance of adult bone. The sequence is that of C-type lectin domain family 11 member A (Clec11a) from Rattus norvegicus (Rat).